The sequence spans 336 residues: uncharacterized protein (336 aa).

The first 33 residues, 1-33, serve as a signal peptide directing secretion; the sequence is MGSAWPAEIRKIAKISKRLLGATVILGFGVAEA.

This is an uncharacterized protein from Sinorhizobium fredii (strain NBRC 101917 / NGR234).